A 129-amino-acid polypeptide reads, in one-letter code: MARDKTRMKRKERKNIAAGVAHVNSSFNNTKILISDVQGNAISWSSAGTMGFKGSRKSTPYAAQMAAEDAAKKAQEHGMKTIEVEVQGPGSGRESALRALAAAGLNITSIRDVTPMAHNGCRPPKRRRV.

Belongs to the universal ribosomal protein uS11 family. Part of the 30S ribosomal subunit. Interacts with proteins S7 and S18. Binds to IF-3.

Located on the platform of the 30S subunit, it bridges several disparate RNA helices of the 16S rRNA. Forms part of the Shine-Dalgarno cleft in the 70S ribosome. The polypeptide is Small ribosomal subunit protein uS11 (Cereibacter sphaeroides (strain ATCC 17025 / ATH 2.4.3) (Rhodobacter sphaeroides)).